The following is a 359-amino-acid chain: MDCGSVGGQRTQRLPGRQRLLFLPVGLSGRPGGSETSARRCLSALSDGLGALRPRAPAARGGVSRASPLLLLLLVPSPRLAAAAPRRQLGDWERSRLGYAAPPAGRSSAWRCSPGVAAAAGALPQYHGPAPALVSCRRELSLSAGSLQLERKRRDFTSSGSRKLYFDTHALVCLLEDNGFATQQAEIIVSALVKILEANMDIVYKDMVTKMQQEITFQQVMSQIANVKKDMIILEKSEFSALRAENEKIKLELHQLKQQVMDEVIKVRTDTKLDFNLEKSRVKELYSLNEKKLLELRTEIVALHAQQDRALTQTDRKIETEVAGLKTMLESHKLDNIKYLAGSIFTCLTVALGFYRLWI.

Over 1-68 the chain is Mitochondrial intermembrane; that stretch reads MDCGSVGGQR…ARGGVSRASP (68 aa). Residues 69–85 traverse the membrane as a helical segment; it reads LLLLLLVPSPRLAAAAP. Over 86–338 the chain is Mitochondrial matrix; the sequence is RRQLGDWERS…LESHKLDNIK (253 aa). Residues 235–310 are a coiled coil; the sequence is EKSEFSALRA…VALHAQQDRA (76 aa). Residues 339–358 traverse the membrane as a helical segment; it reads YLAGSIFTCLTVALGFYRLW. A topological domain (mitochondrial intermembrane) is located at residue Ile359.

Belongs to the CCDC90 family. As to quaternary structure, interacts (via coiled coil regions) with MCU; the interaction is direct. Interacts with SMDT1/EMRE; the interaction is direct. Interacts with PPIF. As to expression, ubiquitously expressed.

The protein resides in the mitochondrion inner membrane. In terms of biological role, key regulator of mitochondrial calcium uniporter (MCU) required for calcium entry into mitochondrion. Plays a direct role in uniporter-mediated calcium uptake via a direct interaction with MCU. Probably involved in the assembly of the membrane components of the uniporter complex (uniplex). The sequence is that of Mitochondrial calcium uniporter regulator 1 from Homo sapiens (Human).